A 146-amino-acid polypeptide reads, in one-letter code: MAWDLFLWIVSFFVSLALVASVFYQVICLTDLEADYLNPFETSTRINRLVIPEFILQGSLCLLFLLTWHWVFFLVAVPVTVYHAMLYKERRYLIDVTEVFRGISFEKKLRYTKLGFYVFLFIMVVFRLTLSAVYSFTEDDDLLHLF.

3 consecutive transmembrane segments (helical) span residues 9 to 29, 61 to 81, and 114 to 134; these read IVSFFVSLALVASVFYQVICL, CLLFLLTWHWVFFLVAVPVTV, and LGFYVFLFIMVVFRLTLSAVY.

It belongs to the cornichon family.

Its subcellular location is the membrane. This is Protein cornichon homolog 1 from Arabidopsis thaliana (Mouse-ear cress).